The chain runs to 1174 residues: Pesticidal crystal protein Cry1Fa (1174 aa).

Belongs to the delta endotoxin family.

Promotes colloidosmotic lysis by binding to the midgut epithelial cells of many lepidopteran larvae. The sequence is that of Pesticidal crystal protein Cry1Fa (cry1Fa) from Bacillus thuringiensis subsp. aizawai.